The chain runs to 1349 residues: DNA-directed RNA polymerase subunit beta' (1349 aa).

Positions 70, 72, 85, and 88 each coordinate Zn(2+). The Mg(2+) site is built by Asp-460, Asp-462, and Asp-464. Zn(2+) contacts are provided by Cys-801, Cys-875, Cys-882, and Cys-885.

It belongs to the RNA polymerase beta' chain family. As to quaternary structure, the RNAP catalytic core consists of 2 alpha, 1 beta, 1 beta' and 1 omega subunit. When a sigma factor is associated with the core the holoenzyme is formed, which can initiate transcription. Mg(2+) is required as a cofactor. It depends on Zn(2+) as a cofactor.

It catalyses the reaction RNA(n) + a ribonucleoside 5'-triphosphate = RNA(n+1) + diphosphate. In terms of biological role, DNA-dependent RNA polymerase catalyzes the transcription of DNA into RNA using the four ribonucleoside triphosphates as substrates. The protein is DNA-directed RNA polymerase subunit beta' of Desulfotalea psychrophila (strain LSv54 / DSM 12343).